Consider the following 323-residue polypeptide: Methionyl-tRNA formyltransferase (323 aa).

A (6S)-5,6,7,8-tetrahydrofolate-binding site is contributed by 118–121; sequence SLLP.

Belongs to the Fmt family.

It catalyses the reaction L-methionyl-tRNA(fMet) + (6R)-10-formyltetrahydrofolate = N-formyl-L-methionyl-tRNA(fMet) + (6S)-5,6,7,8-tetrahydrofolate + H(+). Attaches a formyl group to the free amino group of methionyl-tRNA(fMet). The formyl group appears to play a dual role in the initiator identity of N-formylmethionyl-tRNA by promoting its recognition by IF2 and preventing the misappropriation of this tRNA by the elongation apparatus. The sequence is that of Methionyl-tRNA formyltransferase from Buchnera aphidicola subsp. Baizongia pistaciae (strain Bp).